The primary structure comprises 135 residues: Class I hydrophobin 2 (135 aa).

A signal peptide spans 1–20 (MFARLTSTLFALAAVSAVFA). 4 cysteine pairs are disulfide-bonded: Cys-29–Cys-114, Cys-36–Cys-107, Cys-37–Cys-73, and Cys-115–Cys-128. 2 N-linked (GlcNAc...) asparagine glycosylation sites follow: Asn-117 and Asn-132.

The protein belongs to the fungal hydrophobin family. In terms of assembly, self-assembles to form functional amyloid fibrils called rodlets. Self-assembly into fibrillar rodlets occurs spontaneously at hydrophobic:hydrophilic interfaces and the rodlets further associate laterally to form amphipathic monolayers.

The protein localises to the secreted. Its subcellular location is the cell wall. In terms of biological role, aerial growth, conidiation, and dispersal of filamentous fungi in the environment rely upon a capability of their secreting small amphipathic proteins called hydrophobins (HPBs) with low sequence identity. Class I can self-assemble into an outermost layer of rodlet bundles on aerial cell surfaces, conferring cellular hydrophobicity that supports fungal growth, development and dispersal; whereas Class II form highly ordered films at water-air interfaces through intermolecular interactions but contribute nothing to the rodlet structure. The protein is Class I hydrophobin 2 of Coprinopsis cinerea (strain Okayama-7 / 130 / ATCC MYA-4618 / FGSC 9003) (Inky cap fungus).